The sequence spans 473 residues: MKTDTSTFLAQQIVRLRRRDQIRRLMQRDKTPLAILFMAAVVGTLTGLVGVAFEKTVSWVQNMRIGALVQVADHAFLLWPLAFILSALLAMVGYFLVRKFAPEAGGSGIPEIEGALEELRPVRWWRVLPVKFIGGMGTLGAGMVLGREGPTVQIGGNLGRMVLDVFRMRSAEARHTLLATGAAAGLSAAFNAPLAGILFIIEEMRPQFRYNLISIKAVFTGVIMSSIVFRIFNGEAPIIEVGKLSDAPVNTLWLYLILGIIFGCVGPVFNSLVLRTQDMFQRFHGGEIKKWVLMGGAIGGLCGILGLIEPAAAGGGFNLIPIAAAGNFSVGLLLFIFITRVVTTLLCFSSGAPGGIFAPMLALGTLLGTAFGMAAAVLFPQYHPEAGTFAIAGMGALMAASVRAPLTGIVLVLEMTDNYQLILPMIITCLGATLLAQFLGGKPLYSTILARTLAKQDAEQAAKNQNAPAGENT.

The Cytoplasmic portion of the chain corresponds to 1–32; sequence MKTDTSTFLAQQIVRLRRRDQIRRLMQRDKTP. A helical transmembrane segment spans residues 33–69; that stretch reads LAILFMAAVVGTLTGLVGVAFEKTVSWVQNMRIGALV. The Periplasmic segment spans residues 70–76; sequence QVADHAF. Residues 77–100 traverse the membrane as a helical segment; sequence LLWPLAFILSALLAMVGYFLVRKF. The short motif at 106–110 is the Selectivity filter part_1 element; the sequence is GSGIP. Chloride is bound at residue Ser-107. Residues 109-116 constitute an intramembrane region (helical); that stretch reads IPEIEGAL. Residues 117–123 are Cytoplasmic-facing; the sequence is EELRPVR. A run of 2 helical transmembrane segments spans residues 124–141 and 148–166; these read WWRV…TLGA and EGPT…LDVF. Residues 146 to 150 carry the Selectivity filter part_2 motif; it reads GREGP. The Cytoplasmic segment spans residues 167–176; it reads RMRSAEARHT. 2 intramembrane regions (helical) span residues 177-189 and 193-201; these read LLAT…LSAA and PLAGILFII. Topologically, residues 202–214 are cytoplasmic; it reads EEMRPQFRYNLIS. The helical transmembrane segment at 215–232 threads the bilayer; that stretch reads IKAVFTGVIMSSIVFRIF. The Periplasmic segment spans residues 233–252; the sequence is NGEAPIIEVGKLSDAPVNTL. A helical transmembrane segment spans residues 253–281; the sequence is WLYLILGIIFGCVGPVFNSLVLRTQDMFQ. Over 282–287 the chain is Cytoplasmic; it reads RFHGGE. Residues 288 to 309 form a helical membrane-spanning segment; that stretch reads IKKWVLMGGAIGGLCGILGLIE. Residues 310 to 329 are Periplasmic-facing; sequence PAAAGGGFNLIPIAAAGNFS. The next 2 helical transmembrane spans lie at 330-349 and 355-376; these read VGLL…LCFS and GIFA…MAAA. Positions 355–359 match the Selectivity filter part_3 motif; that stretch reads GIFAP. Residues Ile-356 and Phe-357 each contribute to the chloride site. Topologically, residues 377 to 386 are periplasmic; that stretch reads VLFPQYHPEA. The segment at residues 387–401 is an intramembrane region (helical); it reads GTFAIAGMGALMAAS. An intramembrane region (note=Loop between two helices) is located at residues 402 to 404; the sequence is VRA. The segment at residues 405–416 is an intramembrane region (helical); that stretch reads PLTGIVLVLEMT. The note=Loop between two helices intramembrane region spans 417 to 421; it reads DNYQL. A helical transmembrane segment spans residues 422 to 438; that stretch reads ILPMIITCLGATLLAQF. Topologically, residues 439–473 are cytoplasmic; the sequence is LGGKPLYSTILARTLAKQDAEQAAKNQNAPAGENT. Tyr-445 contributes to the chloride binding site.

It belongs to the chloride channel (TC 2.A.49) family. ClcA subfamily. Homodimer.

It localises to the cell inner membrane. It catalyses the reaction 2 chloride(in) + H(+)(out) = 2 chloride(out) + H(+)(in). Its function is as follows. Proton-coupled chloride transporter. Functions as antiport system and exchanges two chloride ions for 1 proton. Probably acts as an electrical shunt for an outwardly-directed proton pump that is linked to amino acid decarboxylation, as part of the extreme acid resistance (XAR) response. In Salmonella paratyphi A (strain AKU_12601), this protein is H(+)/Cl(-) exchange transporter ClcA.